We begin with the raw amino-acid sequence, 398 residues long: S-adenosylmethionine synthase (398 aa).

Histidine 16 provides a ligand contact to ATP. Mg(2+) is bound at residue aspartate 18. Position 51 (glutamate 51) interacts with K(+). L-methionine-binding residues include glutamate 64 and glutamine 108. A flexible loop region spans residues glutamine 108–alanine 118. Residues aspartate 176–lysine 178, lysine 242–phenylalanine 243, aspartate 251, arginine 257–lysine 258, alanine 274, and lysine 278 contribute to the ATP site. Residue aspartate 251 coordinates L-methionine. Position 282 (lysine 282) interacts with L-methionine.

This sequence belongs to the AdoMet synthase family. Homotetramer; dimer of dimers. Requires Mg(2+) as cofactor. K(+) is required as a cofactor.

The protein localises to the cytoplasm. It catalyses the reaction L-methionine + ATP + H2O = S-adenosyl-L-methionine + phosphate + diphosphate. It functions in the pathway amino-acid biosynthesis; S-adenosyl-L-methionine biosynthesis; S-adenosyl-L-methionine from L-methionine: step 1/1. Catalyzes the formation of S-adenosylmethionine (AdoMet) from methionine and ATP. The overall synthetic reaction is composed of two sequential steps, AdoMet formation and the subsequent tripolyphosphate hydrolysis which occurs prior to release of AdoMet from the enzyme. In Bradyrhizobium diazoefficiens (strain JCM 10833 / BCRC 13528 / IAM 13628 / NBRC 14792 / USDA 110), this protein is S-adenosylmethionine synthase.